The primary structure comprises 368 residues: Chaperone protein DnaJ (368 aa).

A J domain is found at 5–69 (DYYEVLGLSQ…QKRAQYDQFG (65 aa)). The CR-type zinc finger occupies 130 to 212 (GKELNVEIPV…CHGSGKVRKR (83 aa)). Zn(2+) contacts are provided by C143, C146, C160, C163, C186, C189, C200, and C203. CXXCXGXG motif repeat units lie at residues 143–150 (CDTCKGSG), 160–167 (CKHCSGSG), 186–193 (CGHCSGTG), and 200–207 (CTTCHGSG).

The protein belongs to the DnaJ family. Homodimer. Requires Zn(2+) as cofactor.

The protein resides in the cytoplasm. Participates actively in the response to hyperosmotic and heat shock by preventing the aggregation of stress-denatured proteins and by disaggregating proteins, also in an autonomous, DnaK-independent fashion. Unfolded proteins bind initially to DnaJ; upon interaction with the DnaJ-bound protein, DnaK hydrolyzes its bound ATP, resulting in the formation of a stable complex. GrpE releases ADP from DnaK; ATP binding to DnaK triggers the release of the substrate protein, thus completing the reaction cycle. Several rounds of ATP-dependent interactions between DnaJ, DnaK and GrpE are required for fully efficient folding. Also involved, together with DnaK and GrpE, in the DNA replication of plasmids through activation of initiation proteins. The chain is Chaperone protein DnaJ from Bacillus mycoides (strain KBAB4) (Bacillus weihenstephanensis).